The sequence spans 338 residues: Anthranilate phosphoribosyltransferase (338 aa).

Residues Gly-81, 84-85 (GD), Thr-89, 91-94 (NIST), 109-117 (KHGNRAVSS), and Ser-121 contribute to the 5-phospho-alpha-D-ribose 1-diphosphate site. Anthranilate is bound at residue Gly-81. Mg(2+) is bound at residue Ser-93. Asn-112 contributes to the anthranilate binding site. An anthranilate-binding site is contributed by Arg-167. Residues Asp-226 and Glu-227 each contribute to the Mg(2+) site.

It belongs to the anthranilate phosphoribosyltransferase family. Homodimer. It depends on Mg(2+) as a cofactor.

It catalyses the reaction N-(5-phospho-beta-D-ribosyl)anthranilate + diphosphate = 5-phospho-alpha-D-ribose 1-diphosphate + anthranilate. The protein operates within amino-acid biosynthesis; L-tryptophan biosynthesis; L-tryptophan from chorismate: step 2/5. Catalyzes the transfer of the phosphoribosyl group of 5-phosphorylribose-1-pyrophosphate (PRPP) to anthranilate to yield N-(5'-phosphoribosyl)-anthranilate (PRA). This is Anthranilate phosphoribosyltransferase from Myxococcus xanthus (strain DK1622).